The sequence spans 282 residues: Pantothenate synthetase (282 aa).

30–37 lines the ATP pocket; it reads MGNLHDGH. Histidine 37 serves as the catalytic Proton donor. Glutamine 61 provides a ligand contact to (R)-pantoate. Glutamine 61 serves as a coordination point for beta-alanine. An ATP-binding site is contributed by 149–152; it reads GNKD. Residue glutamine 155 participates in (R)-pantoate binding. ATP contacts are provided by residues alanine 178 and 186–189; that span reads MSSR.

Belongs to the pantothenate synthetase family. As to quaternary structure, homodimer.

The protein localises to the cytoplasm. The enzyme catalyses (R)-pantoate + beta-alanine + ATP = (R)-pantothenate + AMP + diphosphate + H(+). The protein operates within cofactor biosynthesis; (R)-pantothenate biosynthesis; (R)-pantothenate from (R)-pantoate and beta-alanine: step 1/1. Functionally, catalyzes the condensation of pantoate with beta-alanine in an ATP-dependent reaction via a pantoyl-adenylate intermediate. In Marinomonas sp. (strain MWYL1), this protein is Pantothenate synthetase.